We begin with the raw amino-acid sequence, 114 residues long: FK506-binding protein 1 (114 aa).

Positions 26 to 114 (GDLVTIHYTG…IFEVELLKVN (89 aa)) constitute a PPIase FKBP-type domain.

This sequence belongs to the FKBP-type PPIase family. FKBP1 subfamily.

It localises to the cytoplasm. The enzyme catalyses [protein]-peptidylproline (omega=180) = [protein]-peptidylproline (omega=0). Inhibited by both FK506 and rapamycin. PPIases accelerate the folding of proteins. It catalyzes the cis-trans isomerization of proline imidic peptide bonds in oligopeptides. This Eremothecium gossypii (strain ATCC 10895 / CBS 109.51 / FGSC 9923 / NRRL Y-1056) (Yeast) protein is FK506-binding protein 1 (FPR1).